Here is a 305-residue protein sequence, read N- to C-terminus: Ribosomal protein L11 methyltransferase (305 aa).

The S-adenosyl-L-methionine site is built by T155, G176, D198, and N241.

This sequence belongs to the methyltransferase superfamily. PrmA family.

It localises to the cytoplasm. The enzyme catalyses L-lysyl-[protein] + 3 S-adenosyl-L-methionine = N(6),N(6),N(6)-trimethyl-L-lysyl-[protein] + 3 S-adenosyl-L-homocysteine + 3 H(+). Its function is as follows. Methylates ribosomal protein L11. The sequence is that of Ribosomal protein L11 methyltransferase from Carboxydothermus hydrogenoformans (strain ATCC BAA-161 / DSM 6008 / Z-2901).